Here is a 319-residue protein sequence, read N- to C-terminus: Taste receptor type 2 member 30 (319 aa).

Residue M1 is a topological domain, extracellular. Residues 2–22 form a helical membrane-spanning segment; sequence ITFLPIIFSILIVVIFVIGNF. Residues 23–46 are Cytoplasmic-facing; the sequence is ANGFIALVNSIEWVKRQKISFVDQ. The helical transmembrane segment at 47–67 threads the bilayer; sequence ILTALAVSRVGLLWVLLLHWY. Topologically, residues 68-86 are extracellular; it reads ATQLNPAFYSVEVRITVYN. A helical membrane pass occupies residues 87-107; sequence VWAVTNHFSSWLATSLSMFYL. At 108-126 the chain is on the cytoplasmic side; sequence LKIANFSNLIFLRIKRRVK. A helical transmembrane segment spans residues 127–147; the sequence is SVVLVILLGPLLFLVCHLFVI. Residues 148–178 lie on the Extracellular side of the membrane; the sequence is NMDETIWTKEYEGNMTWKIKLRSAMYHSNMT. N-linked (GlcNAc...) asparagine glycans are attached at residues N161 and N176. A helical transmembrane segment spans residues 179 to 199; the sequence is LTMLANFVPLTLTLISFLLLI. The Cytoplasmic portion of the chain corresponds to 200–229; the sequence is CSLCKHLKKMQLHGKGSQDPSTKVHIKALQ. A helical membrane pass occupies residues 230-250; it reads TVTSFLLLCAIYFLSMIISVC. Residues 251–259 are Extracellular-facing; sequence NLGRLEKQP. Residues 260–280 form a helical membrane-spanning segment; the sequence is VFMFCQAIIFSYPSTHPFILI. At 281-319 the chain is on the cytoplasmic side; the sequence is LGNKKLKQIFLSVLWHVRYWVKDRSLRLHRFTRAALCKG.

This sequence belongs to the G-protein coupled receptor T2R family.

It is found in the membrane. Receptor that may play a role in the perception of bitterness and is gustducin-linked. May play a role in sensing the chemical composition of the gastrointestinal content. The activity of this receptor may stimulate alpha gustducin, mediate PLC-beta-2 activation and lead to the gating of TRPM5. This chain is Taste receptor type 2 member 30 (TAS2R30), found in Pan troglodytes (Chimpanzee).